We begin with the raw amino-acid sequence, 205 residues long: Thiamine-phosphate synthase (205 aa).

4-amino-2-methyl-5-(diphosphooxymethyl)pyrimidine is bound by residues 37 to 41 (QVREK) and Asn-69. Mg(2+) contacts are provided by Asp-70 and Asp-89. A 4-amino-2-methyl-5-(diphosphooxymethyl)pyrimidine-binding site is contributed by Ser-108. A 2-[(2R,5Z)-2-carboxy-4-methylthiazol-5(2H)-ylidene]ethyl phosphate-binding site is contributed by 134–136 (TGS). Residue Lys-137 coordinates 4-amino-2-methyl-5-(diphosphooxymethyl)pyrimidine. 2-[(2R,5Z)-2-carboxy-4-methylthiazol-5(2H)-ylidene]ethyl phosphate contacts are provided by residues Gly-165 and 185–186 (IS).

Belongs to the thiamine-phosphate synthase family. The cofactor is Mg(2+).

The enzyme catalyses 2-[(2R,5Z)-2-carboxy-4-methylthiazol-5(2H)-ylidene]ethyl phosphate + 4-amino-2-methyl-5-(diphosphooxymethyl)pyrimidine + 2 H(+) = thiamine phosphate + CO2 + diphosphate. It carries out the reaction 2-(2-carboxy-4-methylthiazol-5-yl)ethyl phosphate + 4-amino-2-methyl-5-(diphosphooxymethyl)pyrimidine + 2 H(+) = thiamine phosphate + CO2 + diphosphate. The catalysed reaction is 4-methyl-5-(2-phosphooxyethyl)-thiazole + 4-amino-2-methyl-5-(diphosphooxymethyl)pyrimidine + H(+) = thiamine phosphate + diphosphate. It participates in cofactor biosynthesis; thiamine diphosphate biosynthesis; thiamine phosphate from 4-amino-2-methyl-5-diphosphomethylpyrimidine and 4-methyl-5-(2-phosphoethyl)-thiazole: step 1/1. Functionally, condenses 4-methyl-5-(beta-hydroxyethyl)thiazole monophosphate (THZ-P) and 2-methyl-4-amino-5-hydroxymethyl pyrimidine pyrophosphate (HMP-PP) to form thiamine monophosphate (TMP). The sequence is that of Thiamine-phosphate synthase from Clostridium botulinum (strain 657 / Type Ba4).